A 568-amino-acid chain; its full sequence is Protein yellow (568 aa).

Positions M1 to A28 are cleaved as a signal peptide. 2 N-linked (GlcNAc...) asparagine glycosylation sites follow: N151 and N222.

The protein belongs to the major royal jelly protein family.

The protein resides in the secreted. In terms of biological role, controls the pigmentation pattern of the adult cuticle and larval mouth parts. This Drosophila subobscura (Fruit fly) protein is Protein yellow (y).